The primary structure comprises 1183 residues: PAN2-PAN3 deadenylation complex catalytic subunit PAN2 (1183 aa).

2 WD repeats span residues 150-189 (SIEN…KAAQ) and 289-328 (DVSS…ENAA). The segment at 331–478 (ENGSIVLPPF…EEIEEELNDG (148 aa)) is linker. Positions 439-470 (AEGRARGKGRRDSGPRFRSEKDKKGTYKDKEE) are disordered. Positions 448–469 (RRDSGPRFRSEKDKKGTYKDKE) are enriched in basic and acidic residues. The USP domain occupies 479-864 (EVPKYYRKVE…VPAVIILERE (386 aa)). The 170-residue stretch at 916–1085 (VAIDAEFVAL…HDSIEDAHFA (170 aa)) folds into the Exonuclease domain. 4 residues coordinate a divalent metal cation: Asp-919, Glu-921, Asp-1028, and Asp-1081. The disordered stretch occupies residues 1155-1183 (KSRMATPPPPTKLGLPQWASQNSPSPLRR). Positions 1172–1183 (WASQNSPSPLRR) are enriched in polar residues.

The protein belongs to the peptidase C19 family. PAN2 subfamily. In terms of assembly, forms a heterotrimer with an asymmetric homodimer of the regulatory subunit PAN3 to form the poly(A)-nuclease (PAN) deadenylation complex. Requires a divalent metal cation as cofactor.

The protein resides in the cytoplasm. It carries out the reaction Exonucleolytic cleavage of poly(A) to 5'-AMP.. Its activity is regulated as follows. Positively regulated by the regulatory subunit PAN3. In terms of biological role, catalytic subunit of the poly(A)-nuclease (PAN) deadenylation complex, one of two cytoplasmic mRNA deadenylases involved in mRNA turnover. PAN specifically shortens poly(A) tails of RNA and the activity is stimulated by poly(A)-binding protein PAB1. PAN deadenylation is followed by rapid degradation of the shortened mRNA tails by the CCR4-NOT complex. Deadenylated mRNAs are then degraded by two alternative mechanisms, namely exosome-mediated 3'-5' exonucleolytic degradation, or deadenylation-dependent mRNA decaping and subsequent 5'-3' exonucleolytic degradation by XRN1. May also be involved in post-transcriptional maturation of mRNA poly(A) tails. The protein is PAN2-PAN3 deadenylation complex catalytic subunit PAN2 of Cryptococcus neoformans var. neoformans serotype D (strain B-3501A) (Filobasidiella neoformans).